Reading from the N-terminus, the 230-residue chain is Uracil-DNA glycosylase (230 aa).

Asp-70 (proton acceptor) is an active-site residue.

The protein belongs to the uracil-DNA glycosylase (UDG) superfamily. UNG family.

Its subcellular location is the cytoplasm. The catalysed reaction is Hydrolyzes single-stranded DNA or mismatched double-stranded DNA and polynucleotides, releasing free uracil.. Its function is as follows. Excises uracil residues from the DNA which can arise as a result of misincorporation of dUMP residues by DNA polymerase or due to deamination of cytosine. In Pseudomonas putida (strain ATCC 700007 / DSM 6899 / JCM 31910 / BCRC 17059 / LMG 24140 / F1), this protein is Uracil-DNA glycosylase.